The primary structure comprises 67 residues: Alpha-toxin Bu1 (67 aa).

The 63-residue stretch at 3–65 (RDAYIADDKN…VPIRIPGRCR (63 aa)) folds into the LCN-type CS-alpha/beta domain. 4 disulfides stabilise this stretch: cysteine 13-cysteine 64, cysteine 17-cysteine 37, cysteine 23-cysteine 47, and cysteine 27-cysteine 49. Arginine amide is present on arginine 65.

It belongs to the long (4 C-C) scorpion toxin superfamily. Sodium channel inhibitor family. Alpha subfamily. Expressed by the venom gland.

It localises to the secreted. Its function is as follows. Alpha toxins bind voltage-independently at site-3 of sodium channels (Nav) and inhibit the inactivation of the activated channels, thereby blocking neuronal transmission. Since the experiments have been done on F11 cells (immortalized cell line derived from rat DRG neurons mainly expressing Nav1.3/SCN3A, but also Nav1.7/SCN9A and Nav1.2/SCN2A), it is supposed to act on these channels. The slow of inactivation process is partially reversible. Is lethal to mice. This Buthacus macrocentrus (Turkish scorpion) protein is Alpha-toxin Bu1.